The following is a 320-amino-acid chain: o-succinylbenzoate synthase (320 aa).

The active-site Proton donor is the Lys-133. Mg(2+) contacts are provided by Asp-161, Glu-190, and Asp-213. The active-site Proton acceptor is Lys-235.

This sequence belongs to the mandelate racemase/muconate lactonizing enzyme family. MenC type 1 subfamily. A divalent metal cation serves as cofactor.

The catalysed reaction is (1R,6R)-6-hydroxy-2-succinyl-cyclohexa-2,4-diene-1-carboxylate = 2-succinylbenzoate + H2O. Its pathway is quinol/quinone metabolism; 1,4-dihydroxy-2-naphthoate biosynthesis; 1,4-dihydroxy-2-naphthoate from chorismate: step 4/7. The protein operates within quinol/quinone metabolism; menaquinone biosynthesis. Its function is as follows. Converts 2-succinyl-6-hydroxy-2,4-cyclohexadiene-1-carboxylate (SHCHC) to 2-succinylbenzoate (OSB). The protein is o-succinylbenzoate synthase of Salmonella heidelberg (strain SL476).